The primary structure comprises 250 residues: Thiamine thiazole synthase (250 aa).

Residues S36, 55-56 (EE), G63, V126, and 152-154 (HVD) contribute to the NAD(+) site. The Fe cation site is built by D154 and H169. NAD(+) is bound at residue M216. Residue R226 participates in glycine binding.

Belongs to the THI4 family. Homooctamer; tetramer of dimers. Requires Fe(2+) as cofactor.

The catalysed reaction is hydrogen sulfide + glycine + NAD(+) = ADP-5-ethyl-4-methylthiazole-2-carboxylate + nicotinamide + 3 H2O + H(+). It functions in the pathway cofactor biosynthesis; thiamine diphosphate biosynthesis. Involved in the biosynthesis of the thiazole moiety of thiamine. Catalyzes the conversion of NAD and glycine to adenosine diphosphate 5-(2-hydroxyethyl)-4-methylthiazole-2-carboxylate (ADT), an adenylated thiazole intermediate, using free sulfide as a source of sulfur. The polypeptide is Thiamine thiazole synthase (Thermotoga maritima (strain ATCC 43589 / DSM 3109 / JCM 10099 / NBRC 100826 / MSB8)).